A 760-amino-acid chain; its full sequence is Translocation protein SEC63 homolog (760 aa).

At 1-14 (MAGQQFQYDDSGNT) the chain is on the lumenal side. A helical membrane pass occupies residues 15–35 (FFYFLTSFVGLIVIPATYYLW). The Cytoplasmic portion of the chain corresponds to 36 to 69 (PRDQNAEQIRLKNIRKVYGRCMWYRLRLLKPQPN). The chain crosses the membrane as a helical span at residues 70–90 (IIPTVKKIVLLAGWALFLFLA). Residues 91-188 (YKVSKTDREY…LPAWIVDQKN (98 aa)) are Lumenal-facing. Positions 104 to 165 (NPYEVLNLDP…ESRKNWEEFG (62 aa)) constitute a J domain. A helical membrane pass occupies residues 189-209 (SILVLLVYGLAFMVILPVVVG). In terms of domain architecture, SEC63 1 spans 197–541 (GLAFMVILPV…LKKKPTPVLL (345 aa)). Topologically, residues 210-760 (SWWYRSIRYS…EEEEEEEDDD (551 aa)) are cytoplasmic. The disordered stretch occupies residues 492-617 (AEEQPAEDGQ…DDEAEWQELQ (126 aa)). The span at 518-536 (KGPKKTAKSKKKKPLKKKP) shows a compositional bias: basic residues. Thr537 carries the phosphothreonine modification. The span at 582 to 608 (NRDSQSEKDDGSDRDSDREQDEKQNKD) shows a compositional bias: basic and acidic residues. A coiled-coil region spans residues 597–635 (SDREQDEKQNKDDEAEWQELQQSIQRKERALLETKSKIT). The SEC63 2 domain occupies 637 to 714 (PVYSLYFPEE…GLDQIKPLKL (78 aa)). The disordered stretch occupies residues 720 to 760 (KPVPENHPQWDTAIEGDEDQEDSEGFEDSFEEEEEEEEDDD). Residues 733-760 (IEGDEDQEDSEGFEDSFEEEEEEEEDDD) are compositionally biased toward acidic residues. Ser742 and Ser748 each carry phosphoserine.

As to quaternary structure, the ER translocon complex consists of channel-forming core components SEC61A1, SEC61B and SEC61G and different auxiliary components such as SEC62 and SEC63. Widely expressed, with high levels in the liver.

The protein localises to the endoplasmic reticulum membrane. Functionally, mediates cotranslational and post-translational transport of certain precursor polypeptides across endoplasmic reticulum (ER). Proposed to play an auxiliary role in recognition of precursors with short and apolar signal peptides. May cooperate with SEC62 and HSPA5/BiP to facilitate targeting of small presecretory proteins into the SEC61 channel-forming translocon complex, triggering channel opening for polypeptide translocation to the ER lumen. Required for efficient PKD1/Polycystin-1 biogenesis and trafficking to the plasma membrane of the primary cilia. In Homo sapiens (Human), this protein is Translocation protein SEC63 homolog.